Reading from the N-terminus, the 176-residue chain is Peptide deformylase (176 aa).

Positions 95 and 137 each coordinate Fe cation. Glu138 is an active-site residue. His141 contributes to the Fe cation binding site.

This sequence belongs to the polypeptide deformylase family. Fe(2+) serves as cofactor.

It catalyses the reaction N-terminal N-formyl-L-methionyl-[peptide] + H2O = N-terminal L-methionyl-[peptide] + formate. Removes the formyl group from the N-terminal Met of newly synthesized proteins. Requires at least a dipeptide for an efficient rate of reaction. N-terminal L-methionine is a prerequisite for activity but the enzyme has broad specificity at other positions. This chain is Peptide deformylase, found in Hyphomonas neptunium (strain ATCC 15444).